The chain runs to 144 residues: 3-hydroxyacyl-[acyl-carrier-protein] dehydratase FabZ (144 aa).

The active site involves His-49.

It belongs to the thioester dehydratase family. FabZ subfamily.

It localises to the cytoplasm. It catalyses the reaction a (3R)-hydroxyacyl-[ACP] = a (2E)-enoyl-[ACP] + H2O. Its function is as follows. Involved in unsaturated fatty acids biosynthesis. Catalyzes the dehydration of short chain beta-hydroxyacyl-ACPs and long chain saturated and unsaturated beta-hydroxyacyl-ACPs. The protein is 3-hydroxyacyl-[acyl-carrier-protein] dehydratase FabZ of Clostridium kluyveri (strain NBRC 12016).